The sequence spans 682 residues: RNA helicase NPH-II (682 aa).

Residues 181–354 enclose the Helicase ATP-binding domain; that stretch reads FELLRKRKQI…EFLPDVEFYH (174 aa). Residue 194-201 participates in ATP binding; sequence GSTGIGKT. The short motif at 303 to 306 is the DEXH box element; sequence DEIH. Residues 386–551 form the Helicase C-terminal domain; that stretch reads NISTTLNWCR…KFKLSLPNDL (166 aa).

The protein belongs to the DEAD box helicase family. DEAH subfamily. Monomer.

It localises to the virion. It carries out the reaction ATP + H2O = ADP + phosphate + H(+). In terms of biological role, NTP-dependent helicase that catalyzes unidirectional unwinding of 3'tailed duplex RNAs and plays an important role during transcription of early mRNAs, presumably by preventing R-loop formation behind the elongating RNA polymerase. Might also play a role in the export of newly synthesized mRNA chains out of the core into the cytoplasm. Required for replication and propagation of viral particles. This chain is RNA helicase NPH-II (NPH2), found in Vertebrata (FPV).